Here is an 844-residue protein sequence, read N- to C-terminus: Bifunctional abietadiene synthase, chloroplastic (844 aa).

Residues 1 to 46 constitute a chloroplast transit peptide; sequence QSIPHFSTTLNAGSSARKRRSLYLRWGKGSNKIIACVGEGATSVPY. Lys-245 is a binding site for substrate. Positions 378 and 380 each coordinate Mg(2+). Residues 378–381 carry the DXDD motif motif; the sequence is DIDD. Lys-465 serves as a coordination point for substrate. Mg(2+) contacts are provided by Asp-597, Asp-601, Asn-741, Thr-745, and Glu-749. A DDXXD motif motif is present at residues 597-601; that stretch reads DDLYD.

Belongs to the terpene synthase family. Tpsd subfamily. As to quaternary structure, monomer. Mg(2+) is required as a cofactor.

It is found in the plastid. Its subcellular location is the chloroplast. It carries out the reaction (2E,6E,10E)-geranylgeranyl diphosphate = (+)-copalyl diphosphate. The catalysed reaction is (+)-copalyl diphosphate = abieta-7,13-diene + diphosphate. The enzyme catalyses (+)-copalyl diphosphate = neoabietadiene + diphosphate. It catalyses the reaction (+)-copalyl diphosphate = abieta-8(14),12-diene + diphosphate. It participates in terpene metabolism; oleoresin biosynthesis. Its function is as follows. Involved in defensive oleoresin formation in conifers in response to insect attack or other injury. Involved in diterpene (C20) olefins biosynthesis. Bifunctional enzyme that catalyzes two sequential cyclizations of geranylgeranyl diphosphate (GGPP) to abietadiene. The copalyl diphosphate (CPP) intermediate diffuses freely between the 2 active sites in the enzyme. This chain is Bifunctional abietadiene synthase, chloroplastic (LAS), found in Abies balsamea (Balsam fir).